A 97-amino-acid polypeptide reads, in one-letter code: Small ribosomal subunit protein bS6 (97 aa).

It belongs to the bacterial ribosomal protein bS6 family.

Binds together with bS18 to 16S ribosomal RNA. This Dictyoglomus turgidum (strain DSM 6724 / Z-1310) protein is Small ribosomal subunit protein bS6.